A 441-amino-acid polypeptide reads, in one-letter code: Membrane-bound protease PH1510 (441 aa).

The N-terminal stretch at Met-1 to Ala-20 is a signal peptide. Substrate is bound at residue Gly-64 to Ala-67. Ser-97 serves as the catalytic Nucleophile. Ala-119–Leu-124 lines the substrate pocket. Catalysis depends on Lys-138, which acts as the Proton donor/acceptor. 4 helical membrane-spanning segments follow: residues Val-239–Gly-259, Ile-271–Ile-291, Phe-307–Gly-327, and Ile-344–Val-364.

Belongs to the peptidase S14 family. In terms of assembly, homodimer.

It localises to the membrane. Inhibited by divalent metal cations, including Mg(2+), Mn(2+), Ca(2+) and Zn(2+). Mildly inhibited by 0.01 % SDS and 0.1% dodecyl-beta-D-maltoside. Activity is nearly abolished by 1 % SDS. Its function is as follows. Protease that cleaves its substrates preferentially near hydrophobic or aromatic amino acid residues. Can degrade casein and the stomatin homolog PH1511 (in vitro). The polypeptide is Membrane-bound protease PH1510 (Pyrococcus horikoshii (strain ATCC 700860 / DSM 12428 / JCM 9974 / NBRC 100139 / OT-3)).